Here is a 151-residue protein sequence, read N- to C-terminus: RNA polymerase-binding transcription factor DksA (151 aa).

Cys-114, Cys-117, Cys-135, and Cys-138 together coordinate Zn(2+). A dksA C4-type zinc finger spans residues 114 to 138; the sequence is CNSCSVEIGIRRLEARPTADLCIDC.

Belongs to the DksA family. As to quaternary structure, interacts directly with the RNA polymerase.

It localises to the cytoplasm. In terms of biological role, transcription factor that acts by binding directly to the RNA polymerase (RNAP). Required for negative regulation of rRNA expression and positive regulation of several amino acid biosynthesis promoters. Also required for regulation of fis expression. The sequence is that of RNA polymerase-binding transcription factor DksA from Buchnera aphidicola subsp. Acyrthosiphon pisum (strain APS) (Acyrthosiphon pisum symbiotic bacterium).